The following is a 199-amino-acid chain: Superoxide dismutase [Mn/Fe] (199 aa).

His27, His81, Asp161, and His165 together coordinate Fe(3+). Mn(2+) contacts are provided by His27, His81, Asp161, and His165.

It belongs to the iron/manganese superoxide dismutase family. Homodimer. Requires Mn(2+) as cofactor. Fe(3+) serves as cofactor.

It catalyses the reaction 2 superoxide + 2 H(+) = H2O2 + O2. Its function is as follows. Destroys superoxide anion radicals which are normally produced within the cells and which are toxic to biological systems. Catalyzes the dismutation of superoxide anion radicals into O2 and H2O2 by successive reduction and oxidation of the transition metal ion at the active site. Also contributes to the inhibition of lipid oxidation. Manganese-preferring enzyme, less active with iron than with manganese. This Staphylococcus xylosus protein is Superoxide dismutase [Mn/Fe] (sodA).